Reading from the N-terminus, the 449-residue chain is Exodeoxyribonuclease 7 large subunit (449 aa).

The protein belongs to the XseA family. In terms of assembly, heterooligomer composed of large and small subunits.

The protein localises to the cytoplasm. The catalysed reaction is Exonucleolytic cleavage in either 5'- to 3'- or 3'- to 5'-direction to yield nucleoside 5'-phosphates.. Its function is as follows. Bidirectionally degrades single-stranded DNA into large acid-insoluble oligonucleotides, which are then degraded further into small acid-soluble oligonucleotides. The sequence is that of Exodeoxyribonuclease 7 large subunit from Salmonella paratyphi B (strain ATCC BAA-1250 / SPB7).